Consider the following 410-residue polypeptide: 2-oxoisovalerate dehydrogenase subunit alpha (410 aa).

This sequence belongs to the BCKDHA family. Heterodimer of an alpha and a beta chain. It depends on thiamine diphosphate as a cofactor.

It catalyses the reaction N(6)-[(R)-lipoyl]-L-lysyl-[protein] + 3-methyl-2-oxobutanoate + H(+) = N(6)-[(R)-S(8)-2-methylpropanoyldihydrolipoyl]-L-lysyl-[protein] + CO2. Its function is as follows. The branched-chain alpha-keto dehydrogenase complex catalyzes the overall conversion of alpha-keto acids to acyl-CoA and CO(2). It contains multiple copies of three enzymatic components: branched-chain alpha-keto acid decarboxylase (E1), lipoamide acyltransferase (E2) and lipoamide dehydrogenase (E3). This is 2-oxoisovalerate dehydrogenase subunit alpha (bkdA1) from Pseudomonas aeruginosa (strain ATCC 15692 / DSM 22644 / CIP 104116 / JCM 14847 / LMG 12228 / 1C / PRS 101 / PAO1).